Here is a 367-residue protein sequence, read N- to C-terminus: Glutamate 5-kinase (367 aa).

K10 contacts ATP. S50, D137, and N149 together coordinate substrate. Residues 169-170 (TD) and 211-217 (TGGMATK) contribute to the ATP site. The region spanning 275-353 (AGVIIVDNGA…QEISQILGYE (79 aa)) is the PUA domain.

It belongs to the glutamate 5-kinase family.

The protein resides in the cytoplasm. It carries out the reaction L-glutamate + ATP = L-glutamyl 5-phosphate + ADP. The protein operates within amino-acid biosynthesis; L-proline biosynthesis; L-glutamate 5-semialdehyde from L-glutamate: step 1/2. Functionally, catalyzes the transfer of a phosphate group to glutamate to form L-glutamate 5-phosphate. In Proteus mirabilis (strain HI4320), this protein is Glutamate 5-kinase.